The primary structure comprises 498 residues: ATP synthase subunit beta, chloroplastic (498 aa).

Position 172-179 (172-179 (GGAGVGKT)) interacts with ATP.

It belongs to the ATPase alpha/beta chains family. In terms of assembly, F-type ATPases have 2 components, CF(1) - the catalytic core - and CF(0) - the membrane proton channel. CF(1) has five subunits: alpha(3), beta(3), gamma(1), delta(1), epsilon(1). CF(0) has four main subunits: a(1), b(1), b'(1) and c(9-12).

It localises to the plastid. The protein resides in the chloroplast thylakoid membrane. It carries out the reaction ATP + H2O + 4 H(+)(in) = ADP + phosphate + 5 H(+)(out). In terms of biological role, produces ATP from ADP in the presence of a proton gradient across the membrane. The catalytic sites are hosted primarily by the beta subunits. The chain is ATP synthase subunit beta, chloroplastic from Magnolia tripetala (Umbrella-tree).